Here is a 236-residue protein sequence, read N- to C-terminus: UPF0502 protein Bcenmc03_4618 (236 aa).

Belongs to the UPF0502 family.

The protein is UPF0502 protein Bcenmc03_4618 of Burkholderia orbicola (strain MC0-3).